The sequence spans 501 residues: Splicing factor ESS-2 homolog (501 aa).

Composition is skewed to low complexity over residues M1–G18 and I105–R115. Disordered regions lie at residues M1–L20 and I105–T163. Residues T126–D151 show a composition bias toward polar residues. The span at G152–T163 shows a compositional bias: basic and acidic residues. Residues S409 and S411 each carry the phosphoserine modification. The tract at residues R425–P471 is disordered.

Belongs to the ESS2 family.

The protein resides in the nucleus. This chain is Splicing factor ESS-2 homolog (Es2), found in Drosophila melanogaster (Fruit fly).